A 478-amino-acid chain; its full sequence is JmjC domain-containing histone demethylation protein 1 (478 aa).

Residues 6-70 form a PHD-type zinc finger; it reads VKCHFCKKDD…HVESFKCTLH (65 aa). Residues 242–401 form the JmjC domain; the sequence is SHVESFKDGI…TQLNVVEIEH (160 aa). Substrate is bound at residue Thr-294. Fe cation is bound by residues His-297 and Asp-299. Lys-314 provides a ligand contact to substrate. His-369 is a Fe cation binding site.

Belongs to the JHDM1 histone demethylase family. Fe(2+) is required as a cofactor.

The protein localises to the nucleus. The catalysed reaction is N(6),N(6)-dimethyl-L-lysyl(36)-[histone H3] + 2 2-oxoglutarate + 2 O2 = L-lysyl(36)-[histone H3] + 2 formaldehyde + 2 succinate + 2 CO2. In terms of biological role, histone demethylase that specifically demethylates 'Lys-36' of histone H3, thereby playing a central role in histone code. In Kluyveromyces lactis (strain ATCC 8585 / CBS 2359 / DSM 70799 / NBRC 1267 / NRRL Y-1140 / WM37) (Yeast), this protein is JmjC domain-containing histone demethylation protein 1 (JHD1).